We begin with the raw amino-acid sequence, 330 residues long: ADP-L-glycero-D-manno-heptose-6-epimerase (330 aa).

Residues 11 to 12 (FI), 32 to 33 (DD), glutamine 39, glutamine 54, 75 to 79 (QGACA), and asparagine 92 each bind NADP(+). Tyrosine 139 functions as the Proton acceptor in the catalytic mechanism. Lysine 143 serves as a coordination point for NADP(+). Position 168 (asparagine 168) interacts with substrate. Positions 169 and 177 each coordinate NADP(+). The active-site Proton acceptor is the lysine 177. Residues arginine 179, histidine 186, 200-203 (FGEH), arginine 213, and tyrosine 292 contribute to the substrate site.

It belongs to the NAD(P)-dependent epimerase/dehydratase family. HldD subfamily. As to quaternary structure, homopentamer. The cofactor is NADP(+).

The enzyme catalyses ADP-D-glycero-beta-D-manno-heptose = ADP-L-glycero-beta-D-manno-heptose. The protein operates within nucleotide-sugar biosynthesis; ADP-L-glycero-beta-D-manno-heptose biosynthesis; ADP-L-glycero-beta-D-manno-heptose from D-glycero-beta-D-manno-heptose 7-phosphate: step 4/4. In terms of biological role, catalyzes the interconversion between ADP-D-glycero-beta-D-manno-heptose and ADP-L-glycero-beta-D-manno-heptose via an epimerization at carbon 6 of the heptose. The sequence is that of ADP-L-glycero-D-manno-heptose-6-epimerase from Pseudomonas paraeruginosa (strain DSM 24068 / PA7) (Pseudomonas aeruginosa (strain PA7)).